The following is a 160-amino-acid chain: Protein cornichon homolog 3 (160 aa).

At 1–10 (MAFTFAAFCY) the chain is on the cytoplasmic side. A helical membrane pass occupies residues 11–31 (MLSLVLCAALIFFAIWHIIAF). Topologically, residues 32–72 (DELRTDFKSPIDQCNPVHARERLRNIERICFLLRKLVLPEY) are lumenal. Residues 73–93 (SIHSLFCVMFLCAQEWLTLGL) form a helical membrane-spanning segment. The Cytoplasmic segment spans residues 94–138 (NVPLLFYHFWRYFHCPADSSELAYDPPVVMNADTLSYCQKEAWCK). The chain crosses the membrane as a helical span at residues 139–159 (LAFYLLSFFYYLYCMIYTLVS). Residue serine 160 is a topological domain, lumenal.

This sequence belongs to the cornichon family. Acts as an auxiliary subunit for AMPA-selective glutamate receptors (AMPARs). Found in a complex with GRIA1, GRIA2, GRIA3, GRIA4, CNIH2, CACNG2, CACNG3, CACNG4, CACNG5, CACNG7 and CACNG8. In terms of tissue distribution, brain. Expressed in the neocortex, hippocampal formation, and cerebellum (at protein level).

Its subcellular location is the postsynaptic cell membrane. In terms of biological role, regulates the trafficking and gating properties of AMPA-selective glutamate receptors (AMPARs). Promotes their targeting to the cell membrane and synapses and modulates their gating properties by regulating their rates of activation, deactivation and desensitization. The protein is Protein cornichon homolog 3 (Cnih3) of Rattus norvegicus (Rat).